A 153-amino-acid polypeptide reads, in one-letter code: CASP-like protein 5B1 (153 aa).

Residues 1 to 20 are Cytoplasmic-facing; that stretch reads MRELAGSPGTWSGLSLRVGQ. Residues 21–41 form a helical membrane-spanning segment; it reads LVFAAASVCATASALGFAAYT. A topological domain (extracellular) is located at residue A42. The helical transmembrane segment at 43 to 63 threads the bilayer; that stretch reads FCYLIASMGLQALWSLGLACL. The Cytoplasmic segment spans residues 64-76; the sequence is DCYALKFKKDLHS. Residues 77-97 form a helical membrane-spanning segment; sequence AVLLSLFVVGDWVTAILSFAA. The Extracellular segment spans residues 98 to 128; it reads SCSAAGVVVLFDRDIYACRNPQLPCGRFELA. The chain crosses the membrane as a helical span at residues 129 to 149; sequence IACAFLSWAFSATSALVMFWL. The Cytoplasmic segment spans residues 150 to 153; the sequence is LASL.

It belongs to the Casparian strip membrane proteins (CASP) family. As to quaternary structure, homodimer and heterodimers.

The protein resides in the cell membrane. This is CASP-like protein 5B1 from Oryza sativa subsp. indica (Rice).